The following is a 465-amino-acid chain: G1/S-specific cyclin CLN3 (465 aa).

The Cyclin N-terminal domain occupies 44–171 (EMLHHLLSVE…HILKSLEWVV (128 aa)).

It belongs to the cyclin family. As to quaternary structure, interacts with CDC28 and SLA1. In terms of processing, hyperphosphorylated. GRR1 preferentially mediates the degradation of hyperphosphorylated CLN3.

In terms of biological role, G1/S-specific cyclin essential for the control of the cell cycle at the G1/S (start) transition. CLN3 may be an upstream activator of the G1 cyclins which directly catalyze start. Required for budding and for cell cycle progression and morphogenesis in environment-induced hyphae. Degradation is mediated by GRR1. Through binding to CDC28, controls the phosphorylation of SLA1 which regulates cortical actin patch dynamics. This is G1/S-specific cyclin CLN3 (CLN3) from Candida albicans (strain SC5314 / ATCC MYA-2876) (Yeast).